The following is a 552-amino-acid chain: Hydroxylamine reductase (552 aa).

[2Fe-2S] cluster is bound by residues C3, C6, C18, and C25. 8 residues coordinate hybrid [4Fe-2O-2S] cluster: H250, E274, C318, C406, C434, C459, E493, and K495. Residue C406 is modified to Cysteine persulfide.

Belongs to the HCP family. Requires [2Fe-2S] cluster as cofactor. Hybrid [4Fe-2O-2S] cluster is required as a cofactor.

The protein resides in the cytoplasm. It catalyses the reaction A + NH4(+) + H2O = hydroxylamine + AH2 + H(+). Functionally, catalyzes the reduction of hydroxylamine to form NH(3) and H(2)O. The sequence is that of Hydroxylamine reductase from Shewanella sediminis (strain HAW-EB3).